An 884-amino-acid polypeptide reads, in one-letter code: Telomerase reverse transcriptase (884 aa).

A Reverse transcriptase domain is found at 422–725 (CRNHNSYTLS…TVIQFCAMHI (304 aa)). The Mg(2+) site is built by Asp-530, Asp-670, and Asp-671.

The protein belongs to the reverse transcriptase family. Telomerase subfamily. As to quaternary structure, catalytic subunit of the telomerase holoenzyme complex composed minimally of EST2 and the telomerase RNA template component.

The protein resides in the nucleus. It localises to the chromosome. It is found in the telomere. The enzyme catalyses DNA(n) + a 2'-deoxyribonucleoside 5'-triphosphate = DNA(n+1) + diphosphate. Telomerase is a ribonucleoprotein enzyme essential for the replication of chromosome termini in most eukaryotes. It elongates telomeres. It is a reverse transcriptase that adds simple sequence repeats to chromosome ends by copying a template sequence within the RNA component of the enzyme. The chain is Telomerase reverse transcriptase (EST2) from Saccharomyces cerevisiae (strain ATCC 204508 / S288c) (Baker's yeast).